The following is a 238-amino-acid chain: Aliphatic sulfonates import ATP-binding protein SsuB (238 aa).

Positions 7-221 (VSLHQVHQQF…RPGDAAFASL (215 aa)) constitute an ABC transporter domain. 39 to 46 (GRSGSGKT) contributes to the ATP binding site.

It belongs to the ABC transporter superfamily. Aliphatic sulfonates importer (TC 3.A.1.17.2) family. As to quaternary structure, the complex is composed of two ATP-binding proteins (SsuB), two transmembrane proteins (SsuC) and a solute-binding protein (SsuA).

It is found in the cell inner membrane. The enzyme catalyses ATP + H2O + aliphatic sulfonate-[sulfonate-binding protein]Side 1 = ADP + phosphate + aliphatic sulfonateSide 2 + [sulfonate-binding protein]Side 1.. Its function is as follows. Part of the ABC transporter complex SsuABC involved in aliphatic sulfonates import. Responsible for energy coupling to the transport system. The polypeptide is Aliphatic sulfonates import ATP-binding protein SsuB (Granulibacter bethesdensis (strain ATCC BAA-1260 / CGDNIH1)).